The primary structure comprises 1728 residues: Mitochondrial 3' processome subunit 1 (1728 aa).

The N-terminal 117 residues, 1 to 117 (MRRLILSQTL…AGKMTGSSRF (117 aa)), are a transit peptide targeting the mitochondrion. 3 disordered regions span residues 45 to 71 (HRKR…SGDG), 88 to 156 (ESPV…IGQQ), and 829 to 863 (GCNR…PKGT).

Component of the mitochondrial 3' processome (MPsome) complex composed at least of terminal uridylyltransferase KRET1/TUT1, 3'-5' exonuclease DSS1, MPSS1, MPSS2 and MPSS3. Within the complex, interacts with KRET1.

Its subcellular location is the mitochondrion. As part of the mitochondrial 3' processome (MPsome), involved in the maturation of guided RNA (gRNA) precursors. This Trypanosoma brucei brucei protein is Mitochondrial 3' processome subunit 1.